The primary structure comprises 258 residues: Thymidylate synthase (258 aa).

Arg-21 contributes to the dUMP binding site. Residue His-51 coordinates (6R)-5,10-methylene-5,6,7,8-tetrahydrofolate. 121 to 122 (RR) is a dUMP binding site. The Nucleophile role is filled by Cys-141. DUMP is bound by residues 161–164 (RSAD), Asn-172, and 202–204 (HLY). (6R)-5,10-methylene-5,6,7,8-tetrahydrofolate is bound at residue Asp-164. Position 257 (Ala-257) interacts with (6R)-5,10-methylene-5,6,7,8-tetrahydrofolate.

This sequence belongs to the thymidylate synthase family. Bacterial-type ThyA subfamily. In terms of assembly, homodimer.

It is found in the cytoplasm. The enzyme catalyses dUMP + (6R)-5,10-methylene-5,6,7,8-tetrahydrofolate = 7,8-dihydrofolate + dTMP. Its pathway is pyrimidine metabolism; dTTP biosynthesis. Its function is as follows. Catalyzes the reductive methylation of 2'-deoxyuridine-5'-monophosphate (dUMP) to 2'-deoxythymidine-5'-monophosphate (dTMP) while utilizing 5,10-methylenetetrahydrofolate (mTHF) as the methyl donor and reductant in the reaction, yielding dihydrofolate (DHF) as a by-product. This enzymatic reaction provides an intracellular de novo source of dTMP, an essential precursor for DNA biosynthesis. This Dichelobacter nodosus (strain VCS1703A) protein is Thymidylate synthase.